The following is a 115-amino-acid chain: Procyclic form-specific polypeptide (115 aa).

The first 27 residues, 1–27, serve as a signal peptide directing secretion; it reads MAPRSLYLLAVLLFSANLFAGVGFAAA. Positions 27-97 are disordered; the sequence is AAEGPEDKGL…PEPEPGAATL (71 aa). Residues 31–52 are compositionally biased toward basic and acidic residues; the sequence is PEDKGLTKGGKGKGEKGTKVGA. Asn56 carries an N-linked (GlcNAc...) asparagine glycan. Repeat copies occupy residues 59 to 60, 61 to 62, 63 to 64, 65 to 66, 67 to 68, 69 to 70, 71 to 72, 73 to 74, 75 to 76, 77 to 78, 79 to 80, 81 to 82, 83 to 84, 85 to 86, 87 to 88, 89 to 90, and 91 to 92. A 17 X 2 AA tandem repeats of [DE]-P region spans residues 59–92; sequence DPDPEPEPEPEPEPEPEPEPEPEPEPEPEPEPEP. Over residues 60–90 the composition is skewed to acidic residues; the sequence is PDPEPEPEPEPEPEPEPEPEPEPEPEPEPEP. A lipid anchor (GPI-anchor amidated glycine) is attached at Gly93. Residues 94 to 115 constitute a propeptide, removed in mature form; it reads AATLKSVALPFAIAAAALVAAF.

It localises to the cell membrane. In terms of biological role, major surface antigen of procyclic forms. The sequence is that of Procyclic form-specific polypeptide (PROA) from Trypanosoma brucei brucei.